A 124-amino-acid chain; its full sequence is S-phase delaying protein 1 (124 aa).

A compositionally biased stretch (polar residues) spans Met1 to Gly31. The disordered stretch occupies residues Met1–Ser32.

Belongs to the DIF1/spd1 family. Interacts with cdc22. In terms of processing, ubiquitinated by the DCX(DTL) complex, also named CRL4(CDT2) complex, leading to its degradation.

The protein localises to the cytoplasm. Its subcellular location is the nucleus. Functionally, regulates the ribonucleotide reductase activity through its mediation of the nuclear localization of suc22, the small subunit of the ribonucleotide reductase. Delays the progression of the G1-S phase transition, thereby ensuring the G1 phase is complete. Interacts with both p34 and the p34-p56 complex, although no direct inhibitory effect on the bound proteins has been demonstrated. The action of p14 may happen coincidentally with the cdc10 function or may happen downstream of this. This chain is S-phase delaying protein 1 (spd1), found in Schizosaccharomyces pombe (strain 972 / ATCC 24843) (Fission yeast).